A 101-amino-acid chain; its full sequence is Small ribosomal subunit protein uS14 (101 aa).

The protein belongs to the universal ribosomal protein uS14 family. In terms of assembly, part of the 30S ribosomal subunit. Contacts proteins S3 and S10.

Binds 16S rRNA, required for the assembly of 30S particles and may also be responsible for determining the conformation of the 16S rRNA at the A site. The polypeptide is Small ribosomal subunit protein uS14 (Chromohalobacter salexigens (strain ATCC BAA-138 / DSM 3043 / CIP 106854 / NCIMB 13768 / 1H11)).